The following is a 100-amino-acid chain: Urease subunit gamma (100 aa).

It belongs to the urease gamma subunit family. Heterotrimer of UreA (gamma), UreB (beta) and UreC (alpha) subunits. Three heterotrimers associate to form the active enzyme.

The protein localises to the cytoplasm. It catalyses the reaction urea + 2 H2O + H(+) = hydrogencarbonate + 2 NH4(+). Its pathway is nitrogen metabolism; urea degradation; CO(2) and NH(3) from urea (urease route): step 1/1. This chain is Urease subunit gamma, found in Mycobacterium bovis (strain ATCC BAA-935 / AF2122/97).